Reading from the N-terminus, the 231-residue chain is 7-cyano-7-deazaguanine synthase (231 aa).

8-18 (FSGGQDSTTCL) lines the ATP pocket. Cysteine 187, cysteine 196, cysteine 199, and cysteine 202 together coordinate Zn(2+).

It belongs to the QueC family. Zn(2+) serves as cofactor.

The catalysed reaction is 7-carboxy-7-deazaguanine + NH4(+) + ATP = 7-cyano-7-deazaguanine + ADP + phosphate + H2O + H(+). It participates in purine metabolism; 7-cyano-7-deazaguanine biosynthesis. Functionally, catalyzes the ATP-dependent conversion of 7-carboxy-7-deazaguanine (CDG) to 7-cyano-7-deazaguanine (preQ(0)). This is 7-cyano-7-deazaguanine synthase from Vibrio cholerae serotype O1 (strain ATCC 39541 / Classical Ogawa 395 / O395).